The chain runs to 121 residues: Large ribosomal subunit protein bL12 (121 aa).

Belongs to the bacterial ribosomal protein bL12 family. Homodimer. Part of the ribosomal stalk of the 50S ribosomal subunit. Forms a multimeric L10(L12)X complex, where L10 forms an elongated spine to which 2 to 4 L12 dimers bind in a sequential fashion. Binds GTP-bound translation factors.

Its function is as follows. Forms part of the ribosomal stalk which helps the ribosome interact with GTP-bound translation factors. Is thus essential for accurate translation. This Escherichia coli O45:K1 (strain S88 / ExPEC) protein is Large ribosomal subunit protein bL12.